Consider the following 336-residue polypeptide: Nucleoid-associated protein Spro_3255 (336 aa).

This sequence belongs to the YejK family.

The protein localises to the cytoplasm. It is found in the nucleoid. This is Nucleoid-associated protein Spro_3255 from Serratia proteamaculans (strain 568).